The sequence spans 702 residues: Polyribonucleotide nucleotidyltransferase (702 aa).

Mg(2+) is bound by residues Asp-487 and Asp-493. A KH domain is found at 554–613; that stretch reads PKILTMQINPDKIRDVIGPSGKQINKIIEETGVKIDIEQDGTIFISSVNEEMNKKAKKII. In terms of domain architecture, S1 motif spans 623–691; the sequence is GQVYLGKVKR…KQGRVNLSRK (69 aa).

Belongs to the polyribonucleotide nucleotidyltransferase family. Requires Mg(2+) as cofactor.

The protein resides in the cytoplasm. It carries out the reaction RNA(n+1) + phosphate = RNA(n) + a ribonucleoside 5'-diphosphate. Involved in mRNA degradation. Catalyzes the phosphorolysis of single-stranded polyribonucleotides processively in the 3'- to 5'-direction. This chain is Polyribonucleotide nucleotidyltransferase, found in Anoxybacillus flavithermus (strain DSM 21510 / WK1).